Consider the following 700-residue polypeptide: Elongation factor G (700 aa).

Residues 10 to 286 (TKVRNIGIMA…AVIDYLPSPL (277 aa)) enclose the tr-type G domain. GTP is bound by residues 19-26 (AHIDAGKT), 83-87 (DTPGH), and 137-140 (NKMD).

Belongs to the TRAFAC class translation factor GTPase superfamily. Classic translation factor GTPase family. EF-G/EF-2 subfamily.

The protein resides in the cytoplasm. In terms of biological role, catalyzes the GTP-dependent ribosomal translocation step during translation elongation. During this step, the ribosome changes from the pre-translocational (PRE) to the post-translocational (POST) state as the newly formed A-site-bound peptidyl-tRNA and P-site-bound deacylated tRNA move to the P and E sites, respectively. Catalyzes the coordinated movement of the two tRNA molecules, the mRNA and conformational changes in the ribosome. In Kineococcus radiotolerans (strain ATCC BAA-149 / DSM 14245 / SRS30216), this protein is Elongation factor G.